Reading from the N-terminus, the 247-residue chain is Carboxy-S-adenosyl-L-methionine synthase (247 aa).

Residues Tyr39, 64–66 (GCS), 89–90 (DN), 117–118 (DI), Asn132, and Arg199 contribute to the S-adenosyl-L-methionine site.

Belongs to the class I-like SAM-binding methyltransferase superfamily. Cx-SAM synthase family. As to quaternary structure, homodimer.

The enzyme catalyses prephenate + S-adenosyl-L-methionine = carboxy-S-adenosyl-L-methionine + 3-phenylpyruvate + H2O. In terms of biological role, catalyzes the conversion of S-adenosyl-L-methionine (SAM) to carboxy-S-adenosyl-L-methionine (Cx-SAM). The polypeptide is Carboxy-S-adenosyl-L-methionine synthase (Salmonella paratyphi B (strain ATCC BAA-1250 / SPB7)).